A 299-amino-acid polypeptide reads, in one-letter code: Regucalcin (299 aa).

Residue glutamate 18 coordinates a divalent metal cation. Arginine 101, asparagine 103, and glutamate 121 together coordinate substrate. Lysine 144 carries the N6-succinyllysine modification. Positions 154 and 204 each coordinate a divalent metal cation. Aspartate 204 serves as the catalytic Proton donor/acceptor. An N6-succinyllysine mark is found at lysine 244 and lysine 253.

The protein belongs to the SMP-30/CGR1 family. As to quaternary structure, monomer. Zn(2+) is required as a cofactor. Mn(2+) serves as cofactor. The cofactor is Ca(2+). Requires Mg(2+) as cofactor.

The protein resides in the cytoplasm. It catalyses the reaction D-glucono-1,5-lactone + H2O = D-gluconate + H(+). It participates in cofactor biosynthesis; L-ascorbate biosynthesis via UDP-alpha-D-glucuronate pathway; L-ascorbate from UDP-alpha-D-glucuronate: step 3/4. Functionally, gluconolactonase with low activity towards other sugar lactones, including gulonolactone and galactonolactone. Catalyzes a key step in ascorbic acid (vitamin C) biosynthesis. Can also hydrolyze diisopropyl phosphorofluoridate and phenylacetate (in vitro). Calcium-binding protein. Modulates Ca(2+) signaling, and Ca(2+)-dependent cellular processes and enzyme activities. In Oryctolagus cuniculus (Rabbit), this protein is Regucalcin (RGN).